The chain runs to 93 residues: UPF0367 protein gsr3177 (93 aa).

Belongs to the UPF0367 family.

This chain is UPF0367 protein gsr3177, found in Gloeobacter violaceus (strain ATCC 29082 / PCC 7421).